A 103-amino-acid polypeptide reads, in one-letter code: Co-chaperonin GroES (103 aa).

It belongs to the GroES chaperonin family. Heptamer of 7 subunits arranged in a ring. Interacts with the chaperonin GroEL.

It localises to the cytoplasm. Its function is as follows. Together with the chaperonin GroEL, plays an essential role in assisting protein folding. The GroEL-GroES system forms a nano-cage that allows encapsulation of the non-native substrate proteins and provides a physical environment optimized to promote and accelerate protein folding. GroES binds to the apical surface of the GroEL ring, thereby capping the opening of the GroEL channel. This chain is Co-chaperonin GroES, found in Prochlorococcus marinus (strain MIT 9312).